The primary structure comprises 261 residues: tRNA pseudouridine synthase A (261 aa).

The Nucleophile role is filled by Asp51. Tyr109 lines the substrate pocket.

It belongs to the tRNA pseudouridine synthase TruA family. Homodimer.

It catalyses the reaction uridine(38/39/40) in tRNA = pseudouridine(38/39/40) in tRNA. In terms of biological role, formation of pseudouridine at positions 38, 39 and 40 in the anticodon stem and loop of transfer RNAs. In Shewanella halifaxensis (strain HAW-EB4), this protein is tRNA pseudouridine synthase A.